The chain runs to 280 residues: Lacto-N-neotetraose biosynthesis glycosyltransferase LgtE (280 aa).

It belongs to the glycosyltransferase 25 family.

It participates in glycan metabolism; lacto-N-neotetraose biosynthesis. The protein operates within bacterial outer membrane biogenesis; lipooligosaccharide biosynthesis. Its function is as follows. Adds the first galactose to the lacto-N-tetraose chain in lipooligosaccharide (LOS). The chain is Lacto-N-neotetraose biosynthesis glycosyltransferase LgtE (lgtE) from Neisseria meningitidis serogroup B (strain ATCC BAA-335 / MC58).